A 463-amino-acid chain; its full sequence is Mitochondrial dynamics protein MID51 (463 aa).

At Met-1 to Val-23 the chain is on the mitochondrial intermembrane side. The helical transmembrane segment at Leu-24–Val-46 threads the bilayer. Over Lys-47–Thr-463 the chain is Cytoplasmic. The segment at Met-49–Gln-195 is dimerization. Phosphoserine is present on residues Ser-55, Ser-59, Ser-79, and Ser-94. Residues Pro-57–Met-77 are disordered. The important for interaction with DNM1L stretch occupies residues Ala-160–Arg-169. Residues Ser-187, Ser-189, and His-201 each contribute to the ADP site. Residues Arg-234 to Arg-243 are important for interaction with DNM1L. The ADP site is built by Ser-340, Arg-342, and Lys-368.

The protein belongs to the MID49/MID51 family. As to quaternary structure, homodimer. Interacts with DNM1L.

The protein localises to the mitochondrion outer membrane. Its function is as follows. Mitochondrial outer membrane protein which regulates mitochondrial fission/fusion dynamics. Promotes the recruitment and association of the fission mediator dynamin-related protein 1 (DNM1L) to the mitochondrial surface independently of the mitochondrial fission FIS1 and MFF proteins. Regulates DNM1L GTPase activity and DNM1L oligomerization. Binds ADP and can also bind GDP, although with lower affinity. Does not bind CDP, UDP, ATP, AMP or GTP. Inhibits DNM1L GTPase activity in the absence of bound ADP. Requires ADP to stimulate DNM1L GTPase activity and the assembly of DNM1L into long, oligomeric tubules with a spiral pattern, as opposed to the ring-like DNM1L oligomers observed in the absence of bound ADP. Does not require ADP for its function in recruiting DNM1L. This is Mitochondrial dynamics protein MID51 (Mief1) from Mus musculus (Mouse).